The chain runs to 775 residues: MRGGMAITAALVVVAAAAESRWAELGREITYDGRALVVSGARRMFFSGDMHYARSTPEMWPKLIAKAKNGGLDVIQTYVFWNVHEPIQGQYNFEGRYDLVKFIREIQAQGLYVSLRIGPFVEAEWKYGGFPFWLHDVPSITFRSDNEPFKQHMQNFVTKIVTMMKHEGLYYPQGGPIIISQIENEYQMIEPAFGASGPRYVRWAAAMAVGLQTGVPWMMCKQNDAPDPVINTCNGLICGETFVGPNSPNKPALWTENWTSRSNGQNNSAFSYPIYGNDTKLRAPEDIAFAVALFIARKKGSFVSYYMYHGGTNFGRFAASYVTTSYYDGAPLDEYDFKCVAFLVNFDQHNTPKVEFRNISLELAPKSISVLSDCRNVVFETAKVNAQHGSRTANAVQSLNDINNWKAFIEPVPQDLSKSTYTGNQLFEQLTTTKDETDYLWYIVSYKNRASDGNQIAHLYVKSLAHILHAFVNNEYVGSVHGSHDGPRNIVLNTHMSLKEGDNTISLLSVMVGSPDSGAYMERRTFGIQTVGIQQGQQPMHLLNNDLWGYQVGLFGEKDSIYTQEGTNSVRWMDINNLIYHPLTWYKTTFSTPPGNDAVTLNLTSMGKGEVWVNGESIGRYWVSFKAPSGQPSQSLYHIPRGFLTPKDNLLVLVEEMGGDPLQITVNTMSVTTVCGNVDEFSVPPLQSRGKVPKVRIWCQGGNRISSIEFASYGNPVGDCRSFRIGSCHAESSESVVKQSCIGRRGCSIPVMAAKFGGDPCPGIQKSLLVVADCR.

An N-terminal signal peptide occupies residues 1–17; the sequence is MRGGMAITAALVVVAAA. Catalysis depends on E185, which acts as the Proton donor. The active-site Nucleophile is the E256. N257, N266, N277, N358, and N602 each carry an N-linked (GlcNAc...) asparagine glycan. One can recognise an SUEL-type lectin domain in the interval 689 to 775; it reads RGKVPKVRIW…KSLLVVADCR (87 aa).

The protein belongs to the glycosyl hydrolase 35 family.

The protein localises to the secreted. Its subcellular location is the extracellular space. The protein resides in the apoplast. The enzyme catalyses Hydrolysis of terminal non-reducing beta-D-galactose residues in beta-D-galactosides.. The polypeptide is Beta-galactosidase 7 (Oryza sativa subsp. japonica (Rice)).